The sequence spans 592 residues: N-acetyltransferase ESCO2 (592 aa).

Ser41 and Ser85 each carry phosphoserine. The disordered stretch occupies residues Lys267–Ser294. A Phosphoserine modification is found at Ser309. A CCHH-type zinc finger spans residues Thr384–His408.

This sequence belongs to the acetyltransferase family. ECO subfamily.

The protein resides in the nucleus. It localises to the chromosome. It carries out the reaction L-lysyl-[protein] + acetyl-CoA = N(6)-acetyl-L-lysyl-[protein] + CoA + H(+). Its function is as follows. Acetyltransferase required for the establishment of sister chromatid cohesion. Couples the processes of cohesion and DNA replication to ensure that only sister chromatids become paired together. In contrast to the structural cohesins, the deposition and establishment factors are required only during the S phase. Acetylates the cohesin component SMC3. This chain is N-acetyltransferase ESCO2 (Esco2), found in Mus musculus (Mouse).